The primary structure comprises 277 residues: Large ribosomal subunit protein uL2 (277 aa).

Residues 222–277 (GVAMNPVDHPHGGGEGRTSGGRHPVTPWGKPTKGKKTRSNKATDKFIMRSRHQRKK) are disordered.

The protein belongs to the universal ribosomal protein uL2 family. Part of the 50S ribosomal subunit. Forms a bridge to the 30S subunit in the 70S ribosome.

One of the primary rRNA binding proteins. Required for association of the 30S and 50S subunits to form the 70S ribosome, for tRNA binding and peptide bond formation. It has been suggested to have peptidyltransferase activity; this is somewhat controversial. Makes several contacts with the 16S rRNA in the 70S ribosome. This chain is Large ribosomal subunit protein uL2, found in Brucella abortus (strain S19).